The primary structure comprises 310 residues: Homoserine kinase (310 aa).

91-101 (PIGSGLGSSAC) contacts ATP.

This sequence belongs to the GHMP kinase family. Homoserine kinase subfamily.

It is found in the cytoplasm. It catalyses the reaction L-homoserine + ATP = O-phospho-L-homoserine + ADP + H(+). The protein operates within amino-acid biosynthesis; L-threonine biosynthesis; L-threonine from L-aspartate: step 4/5. Catalyzes the ATP-dependent phosphorylation of L-homoserine to L-homoserine phosphate. The sequence is that of Homoserine kinase from Escherichia coli O17:K52:H18 (strain UMN026 / ExPEC).